Consider the following 821-residue polypeptide: Calpain-3 (821 aa).

A disordered region spans residues 1–34 (MPTVISASMAPRTGASQVPRTMPQAAQGKGTEAG). The Calpain catalytic domain occupies 73–417 (LYLDPEFPPD…FTKLEICNLT (345 aa)). Residues Cys-128, His-334, and Asn-358 contribute to the active site. The segment at 418-586 (ADALESDKLQ…KRNLSEEVEN (169 aa)) is domain III. Residues 587–649 (TISVDRPVRK…EPSNTDQESE (63 aa)) are linker. The interval 603–652 (IFVSDRANSNKELGVDQESEEGQDKTSPDKQEKSPKPEPSNTDQESEEQQ) is disordered. A compositionally biased stretch (basic and acidic residues) spans 624 to 638 (GQDKTSPDKQEKSPK). The span at 641–652 (PSNTDQESEEQQ) shows a compositional bias: polar residues. EF-hand domains are found at residues 649–683 (EEQQ…VVNK), 692–725 (FTLE…KKIK), 722–757 (KKIK…AGFH), and 787–821 (VRLE…TMYA). Residues 650-821 (EQQQFRNIFR…LEWLQLTMYA (172 aa)) are domain IV. Ca(2+)-binding residues include Ala-662, Asp-665, Glu-667, Glu-672, Asp-705, Asp-707, Ser-709, Arg-711, Glu-716, Asp-735, Asp-737, Ser-739, Thr-741, Glu-746, Asp-800, Asp-802, Asp-804, and Ile-806.

The protein belongs to the peptidase C2 family. In terms of assembly, homodimer; via EF-hand domain 4. Interacts with TTN/titin. Interacts with CMYA5; this interaction, which results in CMYA5 proteolysis, may protect CAPN3 from autolysis. Interacts with SIMC1. Interacts with UTP25; the interaction is required for CAPN3 translocation to the nucleolus. Skeletal muscle.

The protein localises to the cytoplasm. Its subcellular location is the nucleus. It is found in the nucleolus. The enzyme catalyses Broad endopeptidase activity.. With respect to regulation, activated by micromolar concentrations of calcium and inhibited by calpastatin. Its function is as follows. Calcium-regulated non-lysosomal thiol-protease. Proteolytically cleaves CTBP1. Mediates, with UTP25, the proteasome-independent degradation of p53/TP53. The sequence is that of Calpain-3 (CAPN3) from Sus scrofa (Pig).